Here is a 329-residue protein sequence, read N- to C-terminus: tRNA (guanine(10)-N2)-dimethyltransferase (329 aa).

Positions 40–143 (NVENVEIFER…KLWIGIRIRE (104 aa)) constitute a THUMP domain.

The protein belongs to the methyltransferase superfamily. Trm-G10 family. In terms of assembly, monomer.

The protein resides in the cytoplasm. The catalysed reaction is guanosine(10) in tRNA + 2 S-adenosyl-L-methionine = N(2)-dimethylguanosine(10) in tRNA + 2 S-adenosyl-L-homocysteine + 2 H(+). In terms of biological role, catalyzes the adenosylmethionine-dependent methylation of the exocyclic amino group (N(2)) of guanosine at position 10 of various tRNAs. Acts via a two-step process that leads to the formation of either N(2)-monomethyl (m(2)G) or N(2)-dimethylguanosine (m(2)(2)G). The chain is tRNA (guanine(10)-N2)-dimethyltransferase (trmG10) from Pyrococcus abyssi (strain GE5 / Orsay).